A 327-amino-acid chain; its full sequence is UPF0065 protein in gbd 5'region (327 aa).

Positions 1-30 (MQRRHFIARAGIAAATAALGLAAMPAQAQA) form a signal peptide, tat-type signal.

This sequence belongs to the UPF0065 (bug) family. Predicted to be exported by the Tat system. The position of the signal peptide cleavage has not been experimentally proven.

It is found in the periplasm. This chain is UPF0065 protein in gbd 5'region, found in Cupriavidus necator (Alcaligenes eutrophus).